We begin with the raw amino-acid sequence, 396 residues long: Ribosomal RNA large subunit methyltransferase I (396 aa).

The PUA domain maps to 2–81 (TVRLILAKGR…EVIDCAFFIR (80 aa)).

Belongs to the methyltransferase superfamily. RlmI family.

It is found in the cytoplasm. It catalyses the reaction cytidine(1962) in 23S rRNA + S-adenosyl-L-methionine = 5-methylcytidine(1962) in 23S rRNA + S-adenosyl-L-homocysteine + H(+). Functionally, specifically methylates the cytosine at position 1962 (m5C1962) of 23S rRNA. The protein is Ribosomal RNA large subunit methyltransferase I of Yersinia pestis bv. Antiqua (strain Antiqua).